Here is a 196-residue protein sequence, read N- to C-terminus: Protein GrpE (196 aa).

The interval 1–40 (MSSKEQKTPEGQAPEEIIMDQHEEVEAVEPNDSAEQVDPR) is disordered.

The protein belongs to the GrpE family. Homodimer.

It is found in the cytoplasm. In terms of biological role, participates actively in the response to hyperosmotic and heat shock by preventing the aggregation of stress-denatured proteins, in association with DnaK and GrpE. It is the nucleotide exchange factor for DnaK and may function as a thermosensor. Unfolded proteins bind initially to DnaJ; upon interaction with the DnaJ-bound protein, DnaK hydrolyzes its bound ATP, resulting in the formation of a stable complex. GrpE releases ADP from DnaK; ATP binding to DnaK triggers the release of the substrate protein, thus completing the reaction cycle. Several rounds of ATP-dependent interactions between DnaJ, DnaK and GrpE are required for fully efficient folding. This is Protein GrpE from Salmonella enteritidis PT4 (strain P125109).